Consider the following 269-residue polypeptide: Glutamate 5-kinase 2 (269 aa).

K16 provides a ligand contact to ATP. The substrate site is built by S57, D144, and N156. An ATP-binding site is contributed by 218–224; the sequence is SGGMISK.

The protein belongs to the glutamate 5-kinase family.

The protein localises to the cytoplasm. The catalysed reaction is L-glutamate + ATP = L-glutamyl 5-phosphate + ADP. Its pathway is amino-acid biosynthesis; L-proline biosynthesis; L-glutamate 5-semialdehyde from L-glutamate: step 1/2. Its function is as follows. Catalyzes the transfer of a phosphate group to glutamate to form L-glutamate 5-phosphate. This is Glutamate 5-kinase 2 from Rhizobium meliloti (strain 1021) (Ensifer meliloti).